The following is a 1297-amino-acid chain: Probable bifunctional E2/E3 enzyme R795 (1297 aa).

Residues cysteine 74 to asparagine 128 form an RING-type; atypical zinc finger. The U-box domain occupies glutamate 678–isoleucine 750. The region spanning glutamate 899–isoleucine 1082 is the VWFA domain. One can recognise a UBC core domain in the interval glutamine 1133–leucine 1279. The Glycyl thioester intermediate role is filled by cysteine 1217.

It in the C-terminal section; belongs to the ubiquitin-conjugating enzyme family.

The catalysed reaction is S-ubiquitinyl-[E2 ubiquitin-conjugating enzyme]-L-cysteine + [acceptor protein]-L-lysine = [E2 ubiquitin-conjugating enzyme]-L-cysteine + N(6)-ubiquitinyl-[acceptor protein]-L-lysine.. It catalyses the reaction S-ubiquitinyl-[E1 ubiquitin-activating enzyme]-L-cysteine + [E2 ubiquitin-conjugating enzyme]-L-cysteine = [E1 ubiquitin-activating enzyme]-L-cysteine + S-ubiquitinyl-[E2 ubiquitin-conjugating enzyme]-L-cysteine.. The protein operates within protein modification; protein ubiquitination. In terms of biological role, catalyzes the covalent attachment of ubiquitin to other proteins. Also acts as an E3 ubiquitin-protein ligase. The chain is Probable bifunctional E2/E3 enzyme R795 from Acanthamoeba polyphaga (Amoeba).